The sequence spans 326 residues: Flap endonuclease 1 (326 aa).

Positions 1 to 100 are N-domain; that stretch reads MGNADLRSLA…DEVEKRREQR (100 aa). Asp-28, Asp-82, Glu-154, Glu-156, Asp-175, Asp-177, and Asp-225 together coordinate Mg(2+). Residues 118–246 are I-domain; it reads RVAKLDSRTQ…TAVKDLHEHG (129 aa). The segment at 318 to 326 is interaction with PCNA; it reads VQTGLDRWA.

Belongs to the XPG/RAD2 endonuclease family. FEN1 subfamily. As to quaternary structure, interacts with PCNA. PCNA stimulates the nuclease activity without altering cleavage specificity. The cofactor is Mg(2+).

Its function is as follows. Structure-specific nuclease with 5'-flap endonuclease and 5'-3' exonuclease activities involved in DNA replication and repair. During DNA replication, cleaves the 5'-overhanging flap structure that is generated by displacement synthesis when DNA polymerase encounters the 5'-end of a downstream Okazaki fragment. Binds the unpaired 3'-DNA end and kinks the DNA to facilitate 5' cleavage specificity. Cleaves one nucleotide into the double-stranded DNA from the junction in flap DNA, leaving a nick for ligation. Also involved in the base excision repair (BER) pathway. Acts as a genome stabilization factor that prevents flaps from equilibrating into structures that lead to duplications and deletions. Also possesses 5'-3' exonuclease activity on nicked or gapped double-stranded DNA. The protein is Flap endonuclease 1 of Haloarcula marismortui (strain ATCC 43049 / DSM 3752 / JCM 8966 / VKM B-1809) (Halobacterium marismortui).